The chain runs to 333 residues: MIKIALDAMGGDHAPMEIIRGARDAAQELGVHILLVGDQEKIQKELDGDEAGGLISIVHAPEVVGMEEHPVSAIRKKKNSSIVVATQLVKEGVADAVVSAGSTGAQMASSLFILGRISGVDRPAISTLLPTAKGVVVLLDAGANVDCRPKHLKQFAVMGSLYAERVLGLPSPKVGLVNIGAEETKGNELTIASYQMLQKTSINFVGNVEGRDLFLGGSDVAVCDGFVGNVILKSAEGLAMSILGMFKQELGRLEDIIGNERIMHMLGSFKRRMDYAEYGGAPLLGVNGVSVICHGSSRARAIKNALRVAKETVEQGLVPAIKESLENDKGVEE.

The protein belongs to the PlsX family. Homodimer. Probably interacts with PlsY.

It localises to the cytoplasm. It carries out the reaction a fatty acyl-[ACP] + phosphate = an acyl phosphate + holo-[ACP]. Its pathway is lipid metabolism; phospholipid metabolism. Its function is as follows. Catalyzes the reversible formation of acyl-phosphate (acyl-PO(4)) from acyl-[acyl-carrier-protein] (acyl-ACP). This enzyme utilizes acyl-ACP as fatty acyl donor, but not acyl-CoA. This Desulforamulus reducens (strain ATCC BAA-1160 / DSM 100696 / MI-1) (Desulfotomaculum reducens) protein is Phosphate acyltransferase.